Consider the following 247-residue polypeptide: Methionyl-tRNA formyltransferase (247 aa).

It belongs to the Fmt family.

It carries out the reaction L-methionyl-tRNA(fMet) + (6R)-10-formyltetrahydrofolate = N-formyl-L-methionyl-tRNA(fMet) + (6S)-5,6,7,8-tetrahydrofolate + H(+). Its function is as follows. Attaches a formyl group to the free amino group of methionyl-tRNA(fMet). The formyl group appears to play a dual role in the initiator identity of N-formylmethionyl-tRNA by promoting its recognition by IF2 and preventing the misappropriation of this tRNA by the elongation apparatus. This is Methionyl-tRNA formyltransferase (fmt) from Vibrio alginolyticus.